The chain runs to 722 residues: Methionine--tRNA ligase (722 aa).

The short motif at 11-21 is the 'HIGH' region element; that stretch reads PYANGPIHAGH. Residues C143, C146, C156, and C159 each contribute to the Zn(2+) site. Residues 344–348 carry the 'KMSKS' region motif; sequence KFSTS. T347 lines the ATP pocket. The tRNA-binding domain maps to 622 to 722; it reads DFAKLDLRVG…KEVKLGAKVR (101 aa).

Belongs to the class-I aminoacyl-tRNA synthetase family. MetG type 1 subfamily. In terms of assembly, homodimer. The cofactor is Zn(2+).

The protein resides in the cytoplasm. The catalysed reaction is tRNA(Met) + L-methionine + ATP = L-methionyl-tRNA(Met) + AMP + diphosphate. In terms of biological role, is required not only for elongation of protein synthesis but also for the initiation of all mRNA translation through initiator tRNA(fMet) aminoacylation. The sequence is that of Methionine--tRNA ligase from Pyrococcus abyssi (strain GE5 / Orsay).